The primary structure comprises 331 residues: Fe-S cluster assembly protein DRE2 (331 aa).

The N-terminal SAM-like domain stretch occupies residues Met-1–Ser-146. The interval Lys-142 to Leu-164 is disordered. Polar residues predominate over residues Ser-146–Thr-158. The linker stretch occupies residues Pro-147–Phe-202. Positions 212, 224, 227, and 229 each coordinate [2Fe-2S] cluster. The fe-S binding site A stretch occupies residues Cys-212–Cys-229. The [4Fe-4S] cluster site is built by Cys-294, Cys-297, Cys-305, and Cys-308. Short sequence motifs (cx2C motif) lie at residues Cys-294–Cys-297 and Cys-305–Cys-308. Residues Cys-294–Cys-308 are fe-S binding site B.

Belongs to the anamorsin family. In terms of assembly, monomer. Interacts with TAH18. Interacts with MIA40. It depends on [2Fe-2S] cluster as a cofactor. The cofactor is [4Fe-4S] cluster.

The protein resides in the cytoplasm. It is found in the mitochondrion intermembrane space. In terms of biological role, component of the cytosolic iron-sulfur (Fe-S) protein assembly (CIA) machinery required for the maturation of extramitochondrial Fe-S proteins. Part of an electron transfer chain functioning in an early step of cytosolic Fe-S biogenesis, facilitating the de novo assembly of a [4Fe-4S] cluster on the scaffold complex CFD1-NBP35. Electrons are transferred to DRE2 from NADPH via the FAD- and FMN-containing protein TAH18. TAH18-DRE2 are also required for the assembly of the diferric tyrosyl radical cofactor of ribonucleotide reductase (RNR), probably by providing electrons for reduction during radical cofactor maturation in the catalytic small subunit RNR2. The polypeptide is Fe-S cluster assembly protein DRE2 (Clavispora lusitaniae (strain ATCC 42720) (Yeast)).